The following is a 358-amino-acid chain: Triacylglycerol lipase (358 aa).

An N-terminal signal peptide occupies residues 1-39 (MVRSMRSRVAARAVAWALAVMPLAGAAGLTMAASPAAVA). An AB hydrolase-1 domain is found at 48–327 (YPVILVHGLA…TSYHWNHLDE (280 aa)). Residue Leu56 participates in substrate binding. Catalysis depends on Ser126, which acts as the Nucleophile. Gln127 is a substrate binding site. Cys229 and Cys308 are oxidised to a cystine. A Ca(2+)-binding site is contributed by Asp280. Active-site charge relay system residues include Asp302 and His324. Positions 326, 330, and 334 each coordinate Ca(2+).

It belongs to the AB hydrolase superfamily. Pseudomonas lipase family. Monomer. Interacts with lipase-specific foldase Lif. The cofactor is Ca(2+).

It is found in the secreted. It catalyses the reaction a triacylglycerol + H2O = a diacylglycerol + a fatty acid + H(+). Its function is as follows. Catalyzes the hydrolysis of triacylglycerol. The polypeptide is Triacylglycerol lipase (Burkholderia plantarii).